The chain runs to 213 residues: CASP-like protein UU2 (213 aa).

The tract at residues 1-26 is disordered; sequence MEDPKGAWQSDVFDNGRDFKPHDKAP. The Cytoplasmic portion of the chain corresponds to 1–53; that stretch reads MEDPKGAWQSDVFDNGRDFKPHDKAPANVTAGTTPPMYNVGAGGSEGNSKALS. Basic and acidic residues predominate over residues 14–25; sequence DNGRDFKPHDKA. A helical membrane pass occupies residues 54–74; the sequence is IISIVLRCLSIMFNVVSLGVI. The Extracellular segment spans residues 75–96; that stretch reads ASNQGKSYFVVWRTLNSSNMQY. An N-linked (GlcNAc...) asparagine glycan is attached at Asn90. The chain crosses the membrane as a helical span at residues 97–117; it reads LFAINVIVLVYCVVQLILSII. At 118 to 137 the chain is on the cytoplasmic side; it reads NLVQGKMVLSGPTQPASTIT. A helical membrane pass occupies residues 138–158; the sequence is YICDQGLTYMLMAGFGAGVAL. Topologically, residues 159 to 184 are extracellular; that stretch reads QASVDKGESGMLDCSGANEFCGKNKA. The helical transmembrane segment at 185–205 threads the bilayer; sequence SAALSFLGFVCIALSANLNYL. Topologically, residues 206 to 213 are cytoplasmic; the sequence is RLYFMAAK.

Belongs to the Casparian strip membrane proteins (CASP) family. As to quaternary structure, homodimer and heterodimers.

Its subcellular location is the cell membrane. The protein is CASP-like protein UU2 of Physcomitrium patens (Spreading-leaved earth moss).